Consider the following 469-residue polypeptide: Cysteine--tRNA ligase (469 aa).

Cysteine 33 is a Zn(2+) binding site. The short motif at 35-45 (ATVQGLPHIGH) is the 'HIGH' region element. Positions 211, 236, and 240 each coordinate Zn(2+). Positions 267 to 271 (KMSKS) match the 'KMSKS' region motif. Residue lysine 270 coordinates ATP.

Belongs to the class-I aminoacyl-tRNA synthetase family. In terms of assembly, monomer. The cofactor is Zn(2+).

It localises to the cytoplasm. The enzyme catalyses tRNA(Cys) + L-cysteine + ATP = L-cysteinyl-tRNA(Cys) + AMP + diphosphate. This chain is Cysteine--tRNA ligase (cysS), found in Mycobacterium bovis (strain ATCC BAA-935 / AF2122/97).